The chain runs to 569 residues: Cationic amino acid transporter 5 (569 aa).

Residues 1-67 (MEGEERGYWR…KQSEHEMKRC (67 aa)) lie on the Cytoplasmic side of the membrane. Residues 68–88 (LTWWDLVWFGFGSVIGAGIFV) form a helical membrane-spanning segment. Residues 89–97 (LTGQEAHEQ) lie on the Extracellular side of the membrane. Residues 98 to 118 (AGPAIVLSYVVSGLSAMLSVF) traverse the membrane as a helical segment. Topologically, residues 119 to 143 (CYTEFAVEIPVAGGSFAYLRIELGD) are cytoplasmic. A helical transmembrane segment spans residues 144–164 (FAAFITAGNILLESIVGTAAV). Residues 165–192 (ARAWTSYFATLLNRSPNALRIKTDLSSG) lie on the Extracellular side of the membrane. A helical transmembrane segment spans residues 193–213 (FNLLDPIAVVVIAASATIASI). Over 214-222 (STRKTSLLN) the chain is Cytoplasmic. Residues 223-243 (WIASAINTLVIFFVIIAGFIH) form a helical membrane-spanning segment. Over 244-251 (ADTSNLTP) the chain is Extracellular. The helical transmembrane segment at 252–272 (FLPFGPEGVFRAAAVVYFAYG) threads the bilayer. Over 273 to 290 (GFDSIATMAEETKNPSRD) the chain is Cytoplasmic. Residues 291 to 311 (IPIGLLGSMSIITVIYCLMAL) traverse the membrane as a helical segment. Residues 312 to 341 (SLSMMQKYTDIDPNAAYSVAFQSVGMKWGK) are Extracellular-facing. Residues 342 to 362 (YLVALGALKGMTTVLLVGALG) traverse the membrane as a helical segment. At 363–389 (QARYVTHIARTHMIPPIFALVHPKTGT) the chain is on the cytoplasmic side. A helical transmembrane segment spans residues 390–410 (PINANLLVAIPSALIAFFSGL). Asp411 is a topological domain (extracellular). Residues 412–432 (VLASLLSISTLFIFTMMPIAL) traverse the membrane as a helical segment. Residues 433–450 (LVRRYYVRQDTPRVHLIK) are Cytoplasmic-facing. Residues 451–471 (LITCLLFVVVSSMGTSAYWGM) form a helical membrane-spanning segment. Topologically, residues 472 to 477 (QRKGSW) are extracellular. A helical transmembrane segment spans residues 478–498 (IGYTVTVPFWFLGTLGIVFFV). The Cytoplasmic portion of the chain corresponds to 499–505 (PQQRTPK). Residues 506–526 (VWGVPLVPWLPCLSIATNIFL) traverse the membrane as a helical segment. The Extracellular portion of the chain corresponds to 527–537 (MGSLGAMAFVR). The helical transmembrane segment at 538-558 (FGVCTLAMLLYYFLLGLHATF) threads the bilayer. Over 559 to 569 (DMAHQQIVPRT) the chain is Cytoplasmic.

Belongs to the amino acid-polyamine-organocation (APC) superfamily. Cationic amino acid transporter (CAT) (TC 2.A.3.3) family. Expressed in roots, stems, flowers, seeds, and leaves. Mostly present in leaf rims and cotyledons of developing seedlings.

The protein resides in the cell membrane. High-affinity permease involved in the transport of the cationic amino acids (e.g. arginine, and, to a lower extent, citrulline and glutamate). Transport mostly basic amino acids, and, to a lower extent neutral and acidic amino acids. This Arabidopsis thaliana (Mouse-ear cress) protein is Cationic amino acid transporter 5 (CAT5).